Consider the following 191-residue polypeptide: Protein Ves (191 aa).

This sequence belongs to the Ves family.

The polypeptide is Protein Ves (Escherichia coli (strain ATCC 8739 / DSM 1576 / NBRC 3972 / NCIMB 8545 / WDCM 00012 / Crooks)).